Here is a 164-residue protein sequence, read N- to C-terminus: Cyclic pyranopterin monophosphate synthase (164 aa).

Residues 75 to 77 and 112 to 113 contribute to the substrate site; these read MAH and ME. The active site involves aspartate 127.

Belongs to the MoaC family. In terms of assembly, homohexamer; trimer of dimers.

The enzyme catalyses (8S)-3',8-cyclo-7,8-dihydroguanosine 5'-triphosphate = cyclic pyranopterin phosphate + diphosphate. It functions in the pathway cofactor biosynthesis; molybdopterin biosynthesis. Catalyzes the conversion of (8S)-3',8-cyclo-7,8-dihydroguanosine 5'-triphosphate to cyclic pyranopterin monophosphate (cPMP). This is Cyclic pyranopterin monophosphate synthase from Desulforamulus reducens (strain ATCC BAA-1160 / DSM 100696 / MI-1) (Desulfotomaculum reducens).